Here is a 415-residue protein sequence, read N- to C-terminus: MQQDYLSQQRFSALPLHPIVRGALAKKGFDFCTPIQALSLPISLNGRDVAGQAQTGTGKTMAFLTATFHHLLTHQDPNLEYPHPRALILAPTRELAVQISNDAEFLAKASGLKTALAYGGDGYDKQLQVIECGVDILIGTTGRVIDYVKQGVIGLDEIQVVVLDEADRMFDLGFIRDIRYLLRKCPAPQARLTMLFSATLSYKVRELAFEDMNDPEYIEIEPEQKTGHRIKEELFYPSNQDKMALLLTLMEDEWPERCIVFANTKHRCEEIWGYLAADGHRVGLLTGDVAQKKRLSLLKQFTDGDLDILVATDVAARGLHISDVTHVFNYDLPDDREDYVHRIGRTGRAGESGVSISFACEEYAMNLPAIEEYIGHSIPVSQYETEALLELPKPYRLKRAVPPQGHTRHRSYHTK.

The Q motif motif lies at 9–37 (QRFSALPLHPIVRGALAKKGFDFCTPIQA). One can recognise a Helicase ATP-binding domain in the interval 40–218 (LPISLNGRDV…FEDMNDPEYI (179 aa)). 53 to 60 (AQTGTGKT) is a binding site for ATP. The DEAD box signature appears at 164–167 (DEAD). In terms of domain architecture, Helicase C-terminal spans 241-389 (DKMALLLTLM…VSQYETEALL (149 aa)).

The protein belongs to the DEAD box helicase family. RhlB subfamily. As to quaternary structure, component of the RNA degradosome, which is a multiprotein complex involved in RNA processing and mRNA degradation.

It localises to the cytoplasm. It carries out the reaction ATP + H2O = ADP + phosphate + H(+). DEAD-box RNA helicase involved in RNA degradation. Has RNA-dependent ATPase activity and unwinds double-stranded RNA. In Haemophilus influenzae (strain PittGG), this protein is ATP-dependent RNA helicase RhlB.